The sequence spans 76 residues: uncharacterized protein (76 aa).

The disordered stretch occupies residues 1 to 24 (MPLRLCQGRKDRASDPVRDDGSPP). Over residues 8–22 (GRKDRASDPVRDDGS) the composition is skewed to basic and acidic residues.

This is an uncharacterized protein from Dryophytes versicolor (chameleon treefrog).